The primary structure comprises 359 residues: DNA-directed RNA polymerase RPB3-11 homolog (359 aa).

This sequence in the N-terminal section; belongs to the archaeal RpoD/eukaryotic RPB3 RNA polymerase subunit family. It in the C-terminal section; belongs to the archaeal RpoL/eukaryotic RPB11/RPC19 RNA polymerase subunit family. As to quaternary structure, part of the viral DNA-directed RNA polymerase that consists of 8 polII-like subunits (RPB1, RPB2, RPB3, RPB5, RPB6, RPB7, RPB9, RPB10), a capping enzyme and a termination factor.

It localises to the host cytoplasm. Its subcellular location is the virion. In terms of biological role, component of the DNA-directed RNA polymerase (RNAP) that catalyzes the transcription in the cytoplasm of viral DNA into RNA using the four ribonucleoside triphosphates as substrates. The protein is DNA-directed RNA polymerase RPB3-11 homolog of Ornithodoros (relapsing fever ticks).